The chain runs to 116 residues: uncharacterized protein (116 aa).

Positions 1-19 are cleaved as a signal peptide; sequence MRWDVIILYAISRPYATRR. A disordered region spans residues 18–50; the sequence is RRTGSHTHPRDSRYIAANQRRPPSACRVGPSPA.

This is an uncharacterized protein from Saccharomyces cerevisiae (strain ATCC 204508 / S288c) (Baker's yeast).